We begin with the raw amino-acid sequence, 207 residues long: Probable RNA 2'-phosphotransferase (207 aa).

It belongs to the KptA/TPT1 family.

Its function is as follows. Removes the 2'-phosphate from RNA via an intermediate in which the phosphate is ADP-ribosylated by NAD followed by a presumed transesterification to release the RNA and generate ADP-ribose 1''-2''-cyclic phosphate (APPR&gt;P). May function as an ADP-ribosylase. The chain is Probable RNA 2'-phosphotransferase from Methanosarcina barkeri (strain Fusaro / DSM 804).